Here is a 1567-residue protein sequence, read N- to C-terminus: ABC multidrug transporter MDR1 (1567 aa).

A compositionally biased stretch (pro residues) spans 1-11; it reads MASQPPQPPSG. The segment at 1-37 is disordered; that stretch reads MASQPPQPPSGQPDTQYEEYQSEVITETTNRPTPAAD. Residues 22 to 32 are compositionally biased toward polar residues; sequence SEVITETTNRP. Residues asparagine 149, asparagine 157, and asparagine 356 are each glycosylated (N-linked (GlcNAc...) asparagine). The region spanning 167-432 is the ABC transporter 1 domain; the sequence is VQYQDTFLSP…FEEMGWYCPP (266 aa). The next 6 membrane-spanning stretches (helical) occupy residues 543–563, 571–591, 636–656, 661–681, 691–711, and 798–818; these read STIA…SLFF, GFFA…LMSI, IPIK…LGGL, AKFF…SAIF, IPQA…YTGF, and LGIL…VSEL. Asparagine 819, asparagine 895, and asparagine 912 each carry an N-linked (GlcNAc...) asparagine glycan. The ABC transporter 2 domain maps to 891–1134; it reads FTWRNVTYDI…LLNYFETHGA (244 aa). 927-934 contacts ATP; it reads GVSGAGKT. The interval 1172-1202 is disordered; that stretch reads ESRHVQQELDRIQSETSKRNEGHGQSAEKEP. A helical transmembrane segment spans residues 1231–1251; sequence IWGKLLLGLTSALFIGFSFFL. The N-linked (GlcNAc...) asparagine glycan is linked to asparagine 1253. Helical transmembrane passes span 1257-1277, 1305-1325, 1345-1365, 1372-1392, and 1498-1518; these read AGLQ…SSLV, VFLL…GIIA, ILLL…QMII, ETAG…NGVL, and GIGW…YYLI.

Belongs to the ABC transporter superfamily. ABCG family. PDR (TC 3.A.1.205) subfamily.

The protein resides in the cell membrane. It catalyses the reaction voriconazole(in) + ATP + H2O = voriconazole(out) + ADP + phosphate + H(+). The enzyme catalyses fluconazole(in) + ATP + H2O = fluconazole(out) + ADP + phosphate + H(+). It carries out the reaction (R)-miconazole(in) + ATP + H2O = (R)-miconazole(out) + ADP + phosphate + H(+). The catalysed reaction is (S)-miconazole(in) + ATP + H2O = (S)-miconazole(out) + ADP + phosphate + H(+). Pleiotropic ABC efflux transporter that may be involved in the modulation susceptibility to a wide range of unrelated cytotoxic compounds. The chain is ABC multidrug transporter MDR1 from Trichophyton equinum (strain ATCC MYA-4606 / CBS 127.97) (Horse ringworm fungus).